Here is a 449-residue protein sequence, read N- to C-terminus: 3-phosphoshikimate 1-carboxyvinyltransferase (449 aa).

3-phosphoshikimate is bound by residues lysine 28, serine 29, and arginine 33. Lysine 28 serves as a coordination point for phosphoenolpyruvate. Residues glycine 105 and arginine 133 each coordinate phosphoenolpyruvate. Serine 179, glutamine 181, aspartate 332, and lysine 359 together coordinate 3-phosphoshikimate. A phosphoenolpyruvate-binding site is contributed by glutamine 181. The active-site Proton acceptor is the aspartate 332. The phosphoenolpyruvate site is built by arginine 363 and arginine 406.

Belongs to the EPSP synthase family. As to quaternary structure, monomer.

The protein localises to the cytoplasm. The catalysed reaction is 3-phosphoshikimate + phosphoenolpyruvate = 5-O-(1-carboxyvinyl)-3-phosphoshikimate + phosphate. It functions in the pathway metabolic intermediate biosynthesis; chorismate biosynthesis; chorismate from D-erythrose 4-phosphate and phosphoenolpyruvate: step 6/7. Functionally, catalyzes the transfer of the enolpyruvyl moiety of phosphoenolpyruvate (PEP) to the 5-hydroxyl of shikimate-3-phosphate (S3P) to produce enolpyruvyl shikimate-3-phosphate and inorganic phosphate. The polypeptide is 3-phosphoshikimate 1-carboxyvinyltransferase (Nitrobacter winogradskyi (strain ATCC 25391 / DSM 10237 / CIP 104748 / NCIMB 11846 / Nb-255)).